Consider the following 111-residue polypeptide: Iron-sulfur cluster assembly protein CyaY (111 aa).

This sequence belongs to the frataxin family.

Involved in iron-sulfur (Fe-S) cluster assembly. May act as a regulator of Fe-S biogenesis. The chain is Iron-sulfur cluster assembly protein CyaY from Cupriavidus pinatubonensis (strain JMP 134 / LMG 1197) (Cupriavidus necator (strain JMP 134)).